The primary structure comprises 921 residues: Protein translocase subunit SecA (921 aa).

ATP is bound by residues Q87, 105-109 (GEGKT), and D516. 4 residues coordinate Zn(2+): C905, C907, C916, and H917.

The protein belongs to the SecA family. Monomer and homodimer. Part of the essential Sec protein translocation apparatus which comprises SecA, SecYEG and auxiliary proteins SecDF-YajC and YidC. It depends on Zn(2+) as a cofactor.

Its subcellular location is the cell inner membrane. The protein localises to the cytoplasm. It carries out the reaction ATP + H2O + cellular proteinSide 1 = ADP + phosphate + cellular proteinSide 2.. Functionally, part of the Sec protein translocase complex. Interacts with the SecYEG preprotein conducting channel. Has a central role in coupling the hydrolysis of ATP to the transfer of proteins into and across the cell membrane, serving both as a receptor for the preprotein-SecB complex and as an ATP-driven molecular motor driving the stepwise translocation of polypeptide chains across the membrane. In Polaromonas sp. (strain JS666 / ATCC BAA-500), this protein is Protein translocase subunit SecA.